The primary structure comprises 151 residues: uncharacterized protein (151 aa).

A coiled-coil region spans residues 35–147 (GIFENERQKL…RETLQESLED (113 aa)).

This is an uncharacterized protein from Helicobacter hepaticus (strain ATCC 51449 / 3B1).